The chain runs to 293 residues: MVDSVYRTRSLGVAAEGLPDQYADGEAARVWQLYIGDTRSRTAEYKAWLLGLLRQHGCHRVLDVACGTGVDSIMLVEEGFSVMSVDASDKMLKYALKERWNRRKEPSFDNWVIEEANWLTLDKDVLSGDGFDAVICLGNSFAHLPDCKGDQSEHRLALKNIASMVRPGGLLVIDHRNYDYILSTGCAPPGKNIYYKSDLTKDITTSVLTVNNKAHMVTLDYTVQVPGTGRDGSPGFSKFRLSYYPHCLASFTELVRAAFGGRCQHSVLGDFKPYKPGQAYVPCYFIHVLKKTD.

Residue valine 2 is modified to N-acetylvaline. (6S)-5-methyl-5,6,7,8-tetrahydrofolate-binding residues include serine 4 and tyrosine 6. The residue at position 10 (serine 10) is a Phosphoserine. S-adenosyl-L-methionine contacts are provided by tyrosine 22, tryptophan 31, tyrosine 34, and arginine 41. Phosphotyrosine is present on tyrosine 34. Lysine 46 is modified (N6-succinyllysine). Residues alanine 65, 86-88, 117-118, leucine 137, 137-140, and arginine 176 contribute to the S-adenosyl-L-methionine site; these read DAS, NW, and LGNS. 3 positions are modified to N6-succinyllysine: lysine 191, lysine 196, and lysine 201. Histidine 215 provides a ligand contact to (6S)-5-methyl-5,6,7,8-tetrahydrofolate. Tyrosine 221 lines the S-adenosyl-L-methionine pocket. Arginine 240 is a (6S)-5-methyl-5,6,7,8-tetrahydrofolate binding site.

It belongs to the class I-like SAM-binding methyltransferase superfamily. Glycine N-methyltransferase family. Homotetramer.

The protein localises to the cytoplasm. It catalyses the reaction glycine + S-adenosyl-L-methionine = sarcosine + S-adenosyl-L-homocysteine + H(+). Inhibited by 5-methyltetrahydrofolate monoglutamate and by 5-methyltetrahydrofolate pentaglutamate, inhibition is much more effective by the pentaglutamate form than by the monoglutamate form. Two molecules of 5-methyltetrahydrofolate are bound per tetramer. The binding sites are localized between subunits. Inhibitor binding may preclude movements of the polypeptide chain that are necessary for enzyme activity. Functionally, catalyzes the methylation of glycine by using S-adenosylmethionine (AdoMet) to form N-methylglycine (sarcosine) with the concomitant production of S-adenosylhomocysteine (AdoHcy), a reaction regulated by the binding of 5-methyltetrahydrofolate. Plays an important role in the regulation of methyl group metabolism by regulating the ratio between S-adenosyl-L-methionine and S-adenosyl-L-homocysteine. The polypeptide is Glycine N-methyltransferase (Gnmt) (Mus musculus (Mouse)).